Reading from the N-terminus, the 450-residue chain is tRNA-2-methylthio-N(6)-dimethylallyladenosine synthase (450 aa).

One can recognise an MTTase N-terminal domain in the interval 14 to 132 (GEFFIETWGC…FPNYLNEVKK (119 aa)). Residues Cys23, Cys59, Cys93, Cys169, Cys173, and Cys176 each contribute to the [4Fe-4S] cluster site. The Radical SAM core domain maps to 155–385 (RKNSMKAFVT…VEVLNEISAK (231 aa)). The TRAM domain occupies 388–450 (KAYEGKIEEV…NSFSLTGEEI (63 aa)).

Belongs to the methylthiotransferase family. MiaB subfamily. Monomer. Requires [4Fe-4S] cluster as cofactor.

It is found in the cytoplasm. It carries out the reaction N(6)-dimethylallyladenosine(37) in tRNA + (sulfur carrier)-SH + AH2 + 2 S-adenosyl-L-methionine = 2-methylsulfanyl-N(6)-dimethylallyladenosine(37) in tRNA + (sulfur carrier)-H + 5'-deoxyadenosine + L-methionine + A + S-adenosyl-L-homocysteine + 2 H(+). Catalyzes the methylthiolation of N6-(dimethylallyl)adenosine (i(6)A), leading to the formation of 2-methylthio-N6-(dimethylallyl)adenosine (ms(2)i(6)A) at position 37 in tRNAs that read codons beginning with uridine. The polypeptide is tRNA-2-methylthio-N(6)-dimethylallyladenosine synthase (Clostridium botulinum (strain ATCC 19397 / Type A)).